The chain runs to 230 residues: Large ribosomal subunit protein uL1 (230 aa).

It belongs to the universal ribosomal protein uL1 family. Part of the 50S ribosomal subunit.

Functionally, binds directly to 23S rRNA. The L1 stalk is quite mobile in the ribosome, and is involved in E site tRNA release. Protein L1 is also a translational repressor protein, it controls the translation of the L11 operon by binding to its mRNA. This chain is Large ribosomal subunit protein uL1, found in Ruminiclostridium cellulolyticum (strain ATCC 35319 / DSM 5812 / JCM 6584 / H10) (Clostridium cellulolyticum).